A 651-amino-acid chain; its full sequence is Tudor domain-containing protein 3 (651 aa).

The region spanning 193-233 is the UBA domain; the sequence is LVDEKALKHITEMGFSKEASRQALMDNGNNLEAALNVLLTS. Disordered regions lie at residues 234–271, 287–369, and 381–450; these read NKQKPVMGPPLRGRGKGRGRIRSEDEEDLGNARPSAPS, EEPK…VSEV, and YSRY…TSIP. The residue at position 256 (serine 256) is a Phosphoserine. Over residues 291 to 312 the composition is skewed to polar residues; sequence SQPQQLHQGQYRSSNTEQNGVK. The span at 313–338 shows a compositional bias: basic and acidic residues; it reads DNNHLRHPPRNDTRQPRNEKPPRFQR. Serine 345 bears the Phosphoserine mark. A Glycyl lysine isopeptide (Lys-Gly) (interchain with G-Cter in SUMO2) cross-link involves residue lysine 470. Positions 555–615 constitute a Tudor domain; it reads MWKPGDECFA…KPIQTEAWEE (61 aa). The segment covering 624–633 has biased composition (basic and acidic residues); that stretch reads EFRRGGDGQP. The segment at 624–651 is disordered; it reads EFRRGGDGQPRRSTRPTQQFYQPPRARN. The segment at 631–651 is EBM motif; may mediate interaction with the EJC; that stretch reads GQPRRSTRPTQQFYQPPRARN.

In terms of assembly, component of mRNA stress granules. Interacts with FMR1, FXR1, FXR2, EWSR1, FUS, SERBP1, EEF1A1 and DDX3X or DDX3Y, and with the small nuclear ribonucleoprotein-associated proteins SNRPB and SNRPN. Interacts with 'Lys-48'-linked tetra-ubiquitin, but not with monoubiquitin or 'Lys-63'-linked ubiquitin chains. May interact with the exon junction complex (EJC) composed at least of CASC3, EIF4A3, MAGOH and RBM8A. Interacts with POLR2A (via the C-terminal domain (CTD)). Post-translationally, probably cleaved by enteroviral 2A proteinase. In terms of tissue distribution, detected in heart, brain, placenta, lung, liver, skeletal muscle, kidney and pancreas.

The protein localises to the cytoplasm. Its subcellular location is the nucleus. In terms of biological role, scaffolding protein that specifically recognizes and binds dimethylarginine-containing proteins. Plays a role in the regulation of translation of target mRNAs by binding Arg/Gly-rich motifs (GAR) in dimethylarginine-containing proteins. In nucleus, acts as a coactivator: recognizes and binds asymmetric dimethylation on the core histone tails associated with transcriptional activation (H3R17me2a and H4R3me2a) and recruits proteins at these arginine-methylated loci. In cytoplasm, acts as an antiviral factor that participates in the assembly of stress granules together with G3BP1. The polypeptide is Tudor domain-containing protein 3 (TDRD3) (Homo sapiens (Human)).